The sequence spans 77 residues: Structural DNA-binding protein p10 (77 aa).

Residues 1-12 (MPTKAGTKSTAN) show a composition bias toward polar residues. The interval 1-38 (MPTKAGTKSTANKKTTKGPSKSGSAKGHTGKTHATALH) is disordered. Positions 17–27 (KGPSKSGSAKG) are enriched in low complexity.

It belongs to the asfivirus P10 family.

The protein localises to the virion. Its function is as follows. May play a role in genome packaging through direct interaction with viral DNA. Binds to ssDNA and dsDNA with the same apparent affinity in vitro. In Ornithodoros (relapsing fever ticks), this protein is Structural DNA-binding protein p10.